A 421-amino-acid chain; its full sequence is MALVVQKYGGSSLESAERIRNVAERIVATKKAGNDVVVVCSAMGDTTDELLELAAAVNPVPPAREMDMLLTAGERISNALVAMAIESLGAEAQSFTGSQAGVLTTERHGNARIVDVTPGRVREALDEGKICIVAGFQGVNKETRDVTTLGRGGSDTTAVALAAALNADVCEIYSDVDGVYTADPRIVPNAQKLEKLSFEEMLELAAVGSKILVLRSVEYARAFNVPLRVRSSYSNDPGTLIAGSMEDIPVEEAVLTGVATDKSEAKVTVLGISDKPGEAAKVFRALADAEINIDMVLQNVSSVEDGTTDITFTCPRSDGRRAMEILKKLQVQGNWTNVLYDDQVGKVSLVGAGMKSHPGVTAEFMEALRDVNVNIELISTSEIRISVLIREDDLDAAARALHEQFQLGGEDEAVVYAGTGR.

7–10 serves as a coordination point for ATP; it reads KYGG. 25–30 contacts substrate; it reads RIVATK. Ser-41 is a binding site for ATP. Substrate contacts are provided by residues 45 to 49, Glu-74, 125 to 126, 151 to 154, and Ser-154; these read DTTDE, LD, and RGGS. Residues 174 to 175, 180 to 185, and Lys-210 each bind ATP; these read SD and YTADPR. ACT domains follow at residues 267–343 and 349–421; these read VTVL…YDDQ and LVGA…GTGR. Residues Asp-274, 274 to 279, 292 to 294, Gln-298, 360 to 361, 374 to 375, and 381 to 382 each bind substrate; these read DKPGEA, NID, VT, NI, and SE.

This sequence belongs to the aspartokinase family. As to quaternary structure, tetramer consisting of 2 isoforms Alpha (catalytic and regulation) and of a homodimer of 2 isoforms Beta (regulation). The dimerization of the beta isoforms is stabilized by the bonding of threonine.

The catalysed reaction is L-aspartate + ATP = 4-phospho-L-aspartate + ADP. It participates in amino-acid biosynthesis; L-lysine biosynthesis via DAP pathway; (S)-tetrahydrodipicolinate from L-aspartate: step 1/4. The protein operates within amino-acid biosynthesis; L-methionine biosynthesis via de novo pathway; L-homoserine from L-aspartate: step 1/3. Its pathway is amino-acid biosynthesis; L-threonine biosynthesis; L-threonine from L-aspartate: step 1/5. Feedback inhibition by lysine and threonine, but he enzyme is moderately inhibited by lysine alone, and threonine alone has no effect. Its function is as follows. Catalyzes the phosphorylation of the beta-carboxyl group of aspartic acid with ATP to yield 4-phospho-L-aspartate, which is involved in the branched biosynthetic pathway leading to the biosynthesis of amino acids lysine, threonine, isoleucine and methionine. The protein is Aspartokinase (lysC) of Corynebacterium glutamicum (strain ATCC 13032 / DSM 20300 / JCM 1318 / BCRC 11384 / CCUG 27702 / LMG 3730 / NBRC 12168 / NCIMB 10025 / NRRL B-2784 / 534).